The following is an 80-amino-acid chain: RNA-binding protein Hfq (80 aa).

In terms of domain architecture, Sm spans 10–70; that stretch reads DLFLNTVRKQ…ISTIMPGQPM (61 aa).

It belongs to the Hfq family. In terms of assembly, homohexamer.

Functionally, RNA chaperone that binds small regulatory RNA (sRNAs) and mRNAs to facilitate mRNA translational regulation in response to envelope stress, environmental stress and changes in metabolite concentrations. Also binds with high specificity to tRNAs. This is RNA-binding protein Hfq from Rhizobium etli (strain CIAT 652).